A 388-amino-acid chain; its full sequence is Glucose-1-phosphate adenylyltransferase (388 aa).

Residues tyrosine 100, glycine 165, 180–181, and serine 191 each bind alpha-D-glucose 1-phosphate; that span reads EK.

It belongs to the bacterial/plant glucose-1-phosphate adenylyltransferase family. In terms of assembly, homotetramer.

It catalyses the reaction alpha-D-glucose 1-phosphate + ATP + H(+) = ADP-alpha-D-glucose + diphosphate. It functions in the pathway glycan biosynthesis; glycogen biosynthesis. Functionally, involved in the biosynthesis of ADP-glucose, a building block required for the elongation reactions to produce glycogen. Catalyzes the reaction between ATP and alpha-D-glucose 1-phosphate (G1P) to produce pyrophosphate and ADP-Glc. The chain is Glucose-1-phosphate adenylyltransferase from Clostridium perfringens (strain SM101 / Type A).